We begin with the raw amino-acid sequence, 536 residues long: ATP synthase subunit alpha, mitochondrial (536 aa).

Residues 1-24 constitute a mitochondrion transit peptide; the sequence is MFKNALRRAGVAAPRISRVAQRGY. 195–202 lines the ATP pocket; the sequence is GDRQTGKT.

In terms of assembly, F-type ATP synthases have 2 components, the catalytic core F(1) and the membrane-embedded component F(0), linked together by a central stalk and a peripheral stalk. The central stalk, also called rotor shaft, is often seen as part of F(1). The peripheral stalk is seen as part of F(0). F(0) contains the membrane channel next to the rotor. F-type ATP synthases form dimers but each monomer functions independently in ATP generation. The dimer consists of 17 different polypeptides: ATP1 (subunit alpha, 3 molecules per monomer, part of F(1)), ATP2 (subunit beta, 3 copies per monomer, part of F(1)), ATP3 (subunit gamma, part of the central stalk), ATP4 (subunit b, part of the peripheral stalk), ATP5/OSCP (subunit 5/OSCP, part of the peripheral stalk), ATP6 (subunit a, part of the peripheral stalk), ATP7 (subunit d, part of the peripheral stalk), ATP8 (subunit 8, part of the peripheral stalk), OLI1 (subunit c, part of the rotor, 10 molecules per monomer), ATP14 (subunit h, part of the peripheral stalk), ATP15 (subunit epsilon, part of the central stalk), ATP16 (subunit delta, part of the central stalk), ATP17 (subunit f, part of the peripheral stalk), ATP18 (subunit i/j, part of the peripheral stalk), ATP19 (subunit k, dimer-specific, at interface between monomers), ATP20 (subunit g, at interface between monomers), TIM11 (subunit e, at interface between monomers).

It is found in the mitochondrion inner membrane. In terms of biological role, mitochondrial membrane ATP synthase (F(1)F(0) ATP synthase or Complex V) produces ATP from ADP in the presence of a proton gradient across the membrane which is generated by electron transport complexes of the respiratory chain. F-type ATP synthases consist of two structural domains, F(1) - containing the extramembraneous catalytic core, and F(0) - containing the membrane proton channel, linked together by a central stalk and a peripheral stalk. During catalysis, ATP synthesis in the catalytic domain of F(1) is coupled via a rotary mechanism of the central stalk subunits to proton translocation. Subunits alpha/ATP1 and beta/ATP2 form the catalytic core in F(1). Rotation of the central stalk against the surrounding alpha/ATP1(3)beta/ATP2(3) subunits leads to hydrolysis of ATP in three separate catalytic sites on the beta/ATP2 subunits. Subunit alpha/ATP1 does not bear the catalytic high-affinity ATP-binding sites. The protein is ATP synthase subunit alpha, mitochondrial of Yarrowia lipolytica (strain CLIB 122 / E 150) (Yeast).